The sequence spans 171 residues: 3-hydroxydecanoyl-[acyl-carrier-protein] dehydratase (171 aa).

His70 is an active-site residue.

Belongs to the thioester dehydratase family. FabA subfamily. In terms of assembly, homodimer.

It is found in the cytoplasm. The enzyme catalyses a (3R)-hydroxyacyl-[ACP] = a (2E)-enoyl-[ACP] + H2O. The catalysed reaction is (3R)-hydroxydecanoyl-[ACP] = (2E)-decenoyl-[ACP] + H2O. It catalyses the reaction (2E)-decenoyl-[ACP] = (3Z)-decenoyl-[ACP]. It functions in the pathway lipid metabolism; fatty acid biosynthesis. Its function is as follows. Necessary for the introduction of cis unsaturation into fatty acids. Catalyzes the dehydration of (3R)-3-hydroxydecanoyl-ACP to E-(2)-decenoyl-ACP and then its isomerization to Z-(3)-decenoyl-ACP. Can catalyze the dehydratase reaction for beta-hydroxyacyl-ACPs with saturated chain lengths up to 16:0, being most active on intermediate chain length. The protein is 3-hydroxydecanoyl-[acyl-carrier-protein] dehydratase of Shewanella frigidimarina (strain NCIMB 400).